The chain runs to 150 residues: Cdc42 effector protein 5 (150 aa).

3 disordered regions span residues 1 to 20, 34 to 89, and 114 to 133; these read MPVM…DRGA, LHVG…PADP, and SETT…QHPK. One can recognise a CRIB domain in the interval 23 to 37; it reads ISAPLGDFRHTLHVG. The residue at position 38 (Arg38) is an Omega-N-methylarginine. Composition is skewed to pro residues over residues 55–66 and 74–87; these read GPPPEPGAPPVV and PAAP…PSPA. Over residues 114–127 the composition is skewed to basic and acidic residues; the sequence is SETTATKPDGDAHP.

It belongs to the BORG/CEP family. As to quaternary structure, interacts with CDC42 in a GTP-dependent manner, and with SEPT7. Highly expressed in the skeletal muscle.

The protein localises to the endomembrane system. It is found in the cytoplasm. Its subcellular location is the cytoskeleton. Functionally, probably involved in the organization of the actin cytoskeleton. May act downstream of CDC42 to induce actin filament assembly leading to cell shape changes. Induces pseudopodia formation in fibroblasts. Inhibits MAPK8 independently of CDC42 binding. Controls septin organization and this effect is negatively regulated by CDC42. In Mus musculus (Mouse), this protein is Cdc42 effector protein 5 (Cdc42ep5).